We begin with the raw amino-acid sequence, 189 residues long: Potassium-transporting ATPase KdpC subunit (189 aa).

Residues 8-28 (LVMLILLTLITGIAYPLLTTG) traverse the membrane as a helical segment.

Belongs to the KdpC family. In terms of assembly, the system is composed of three essential subunits: KdpA, KdpB and KdpC.

It localises to the cell inner membrane. Part of the high-affinity ATP-driven potassium transport (or Kdp) system, which catalyzes the hydrolysis of ATP coupled with the electrogenic transport of potassium into the cytoplasm. This subunit acts as a catalytic chaperone that increases the ATP-binding affinity of the ATP-hydrolyzing subunit KdpB by the formation of a transient KdpB/KdpC/ATP ternary complex. This Serratia proteamaculans (strain 568) protein is Potassium-transporting ATPase KdpC subunit.